The primary structure comprises 218 residues: Protein-L-isoaspartate O-methyltransferase 1 (218 aa).

Ser69 is a catalytic residue.

Belongs to the methyltransferase superfamily. L-isoaspartyl/D-aspartyl protein methyltransferase family.

The protein localises to the cytoplasm. The catalysed reaction is [protein]-L-isoaspartate + S-adenosyl-L-methionine = [protein]-L-isoaspartate alpha-methyl ester + S-adenosyl-L-homocysteine. Its function is as follows. Catalyzes the methyl esterification of L-isoaspartyl residues in peptides and proteins that result from spontaneous decomposition of normal L-aspartyl and L-asparaginyl residues. It plays a role in the repair and/or degradation of damaged proteins. The sequence is that of Protein-L-isoaspartate O-methyltransferase 1 from Marinobacter nauticus (strain ATCC 700491 / DSM 11845 / VT8) (Marinobacter aquaeolei).